The following is an 881-amino-acid chain: MKNPYDSKKIESYFFMFWKKNNLFKKKLNSNKDNFCIILPPPNITGDLHVGHAFQQSIIDIFIRYNYMKGNNVLLQSGIDHAGISTQSILEKKIYFYENKNRFDYGRKNFIKEIWKWKEESEKKICYQINKLGCFTDLNKIRFTMDKDSCKAVNNVFLKLYKDKLIYKKKKLMHWDVKLRTVISDLEIENREINGKLWYIKYFFSENSNKNSKLNFLEIATTRPETIFGDVAVAVNPLDARYNNLIGKYIKVPLTNRSIPIIQDDYVKMDYGSGCVKITPGHDFNDFSICKNHKLNIINILTISGKICKKPKVYDFNGNSVSDTNIKIPKELQGLSISEARNNIVYKLNRKEYITKFEYKKVVLPFGDRSGDILEPMLTNQWYIKTKKLSEVAIEAVKEKKIKFISKQYENMYFGWMENIKDWCISRQLWWGHRIPIWYDVNKNQYPGISESDVRDNFKINKEEILTQEEDVLDTWFSSAIWSFASLGWPQKSIKFDTFHPTNLIISGFDIIYFWISRMIMLTMYIIKDSFGNPQIPFKNIFITGLIRDKNGIKMSKSKGNVIDPIDIIDGISLEDLIKKRTKEISNIKLIKKIEKITKKEFPNGIQNHGADAVRLSMASISCSNRKINIDIKKIIGYKNFCNKLWNVSKFIIINLKNKKVSFEEKEINLHKIDNWILHKYNKVFKYYKYNIDNFRLDLVVNILYEFIWHQFCDWYIENSKIIFKNNIISRLNNTCYTLFFILENSLKMLHPFIPFITEEIWKNLSKMVRNERKNTTILEFFPKKYLFLKKDNSFNEIECIKNIITCIRKLKFEKKTKFNKLVDVCFINNSYEEKIIILNNIEIIKNIAFVKNVDFSRSIPKNVLKKDIKIINNIKIYIYN.

The 'HIGH' region motif lies at 42–52; sequence PNITGDLHVGH. The short motif at 554-558 is the 'KMSKS' region element; sequence KMSKS. Lys557 is a binding site for ATP.

It belongs to the class-I aminoacyl-tRNA synthetase family. ValS type 1 subfamily. Monomer.

Its subcellular location is the cytoplasm. It catalyses the reaction tRNA(Val) + L-valine + ATP = L-valyl-tRNA(Val) + AMP + diphosphate. Its function is as follows. Catalyzes the attachment of valine to tRNA(Val). As ValRS can inadvertently accommodate and process structurally similar amino acids such as threonine, to avoid such errors, it has a 'posttransfer' editing activity that hydrolyzes mischarged Thr-tRNA(Val) in a tRNA-dependent manner. In Wigglesworthia glossinidia brevipalpis, this protein is Valine--tRNA ligase.